A 689-amino-acid chain; its full sequence is MQNIDLISEQEAKKLLKELADKIAMYNHAYYIEDNPLVSDSEYDQLFNINLKLENTFPHLVLSNSPSKKVGANITNKFAKVIHQAPMLSLSNAFDEDDLRDFLERIKNFLRINEFTPIFCEPKIDGVSFSAIYKNGLFITGATRGDGYVGEDITMNIKTIKNFPHKIDNAPEFLEVRGEIYIEKQDFLNLNKEQEAQNRGKFANPRNAAAGSIRQLDVAITAQRPLKYFIYSGGVTEQNLASTQEQLLTKLKALSFSVNEISKLASSEEEIFAFYEYLKTNRHNLPYEIDGVVYKLNNFAMQNRMGFIARSPRFAIAHKFPAIIGQTKLLSITVQVGRTGMLTPVAELDPIEIGGVVVSRATLHNFQDIARKDVRIKDYVFLQRAGDVIPQITGVDISKRSNDTVKFDTPVFCPSCNSKLRYVSEDIIIRCDNGLNCPAQNYERICHFVSKNAMDIEGLGRKQVAFLIDKRLISNPLDIFFLKEKNETNLIRLENMDGWGKKSVANLFKNIEKSQKISLQRFIYALGIRHIGEQNAKLLAREFGSYNNFIAQMELLSKNDSDIYQKLNDLEGIGDKILVDIVDFFYVKENTQLIKRLGSVLNIEDYQETREQNILTGKIVVFTGSLSTISRVEAKEIAEKLGAKVTASVSLNTDLVIAGVNGGSKLKKAKELNIKIIDEVEWLAFIKNA.

NAD(+) is bound by residues 40 to 44, 89 to 90, and Glu121; these read DSEYD and SL. The active-site N6-AMP-lysine intermediate is Lys123. Residues Arg144, Glu179, Lys295, and Lys319 each coordinate NAD(+). Positions 413, 416, 431, and 437 each coordinate Zn(2+). The region spanning 610–689 is the BRCT domain; the sequence is REQNILTGKI…VEWLAFIKNA (80 aa).

The protein belongs to the NAD-dependent DNA ligase family. LigA subfamily. It depends on Mg(2+) as a cofactor. Mn(2+) serves as cofactor.

It carries out the reaction NAD(+) + (deoxyribonucleotide)n-3'-hydroxyl + 5'-phospho-(deoxyribonucleotide)m = (deoxyribonucleotide)n+m + AMP + beta-nicotinamide D-nucleotide.. In terms of biological role, DNA ligase that catalyzes the formation of phosphodiester linkages between 5'-phosphoryl and 3'-hydroxyl groups in double-stranded DNA using NAD as a coenzyme and as the energy source for the reaction. It is essential for DNA replication and repair of damaged DNA. This is DNA ligase from Rickettsia prowazekii (strain Madrid E).